The chain runs to 663 residues: DNA topoisomerase 4 subunit B (663 aa).

ATP-binding positions include Tyr7, Asn47, Asp74, 114-120 (GLHGVGA), and Lys341. The segment at 386 to 416 (REAARKAREDARSGKKNKRKDTLLSGKLTPA) is disordered. The span at 387–398 (EAARKAREDARS) shows a compositional bias: basic and acidic residues. The Toprim domain maps to 424–538 (NELYLVEGDS…ADRVFIALPP (115 aa)). Positions 430, 503, and 505 each coordinate Mg(2+).

This sequence belongs to the type II topoisomerase family. ParE type 2 subfamily. Heterotetramer composed of ParC and ParE. The cofactor is Mg(2+). Mn(2+) is required as a cofactor. Requires Ca(2+) as cofactor.

It carries out the reaction ATP-dependent breakage, passage and rejoining of double-stranded DNA.. Topoisomerase IV is essential for chromosome segregation. It relaxes supercoiled DNA. Performs the decatenation events required during the replication of a circular DNA molecule. The polypeptide is DNA topoisomerase 4 subunit B (Staphylococcus aureus (strain MSSA476)).